Consider the following 419-residue polypeptide: MNKHQKPVLTGQRFKTRKRDEKEKFEPTVFRDTLVQGLNEAGDDLEAVAKFLDSTGSRLDYRRYADTLFDILVAGSMLAPGGTRIDDGDKTKMTNHCVFSANEDHETIRNYAQVFNKLIRRYKYLEKAFEDEMKKLLLFLKAFSETEQTKLAMLSGILLGNGTLPATILTSLFTDSLVKEGIAASFAVKLFKAWMAEKDANSVTSSLRKANLDKRLLELFPVNRQSVDHFAKYFTDAGLKELSDFLRVQQSLGTRKELQKELQERLSQECPIKEVVLYVKEEMKRNDLPETAVIGLLWTCIMNAVEWNKKEELVAEQALKHLKQYAPLLAVFSSQGQSELILLQKVQEYCYDNIHFMKAFQKIVVLFYKADVLSEEAILKWYKEAHVAKGKSVFLDQMKKFVEWLQNAEEESESEGEGN.

A disordered region spans residues 1 to 22 (MNKHQKPVLTGQRFKTRKRDEK). K117 is subject to N6-acetyllysine. In terms of domain architecture, W2 spans 248–415 (VQQSLGTRKE…QNAEEESESE (168 aa)). Phosphoserine occurs at positions 412 and 414.

Belongs to the BZW family. As to quaternary structure, interacts with EIF3E, EIF2S2 and EIF3C.

It localises to the cytoplasm. In terms of biological role, translation initiation regulator which represses non-AUG initiated translation and repeat-associated non-AUG (RAN) initiated translation by acting as a competitive inhibitor of eukaryotic translation initiation factor 5 (EIF5) function. Increases the accuracy of translation initiation by impeding EIF5-dependent translation from non-AUG codons by competing with it for interaction with EIF2S2 within the 43S pre-initiation complex (PIC) in an EIF3C-binding dependent manner. The protein is eIF5-mimic protein 1 (BZW2) of Macaca fascicularis (Crab-eating macaque).